The following is a 69-amino-acid chain: Large ribosomal subunit protein uL29 (69 aa).

The protein belongs to the universal ribosomal protein uL29 family.

This Staphylococcus saprophyticus subsp. saprophyticus (strain ATCC 15305 / DSM 20229 / NCIMB 8711 / NCTC 7292 / S-41) protein is Large ribosomal subunit protein uL29.